The following is a 700-amino-acid chain: Dipeptidyl aminopeptidase 1 (700 aa).

The signal sequence occupies residues 1–27 (MAKRIFSVSFLLVLLNVLHICIKFSVA). Asparagine 52, asparagine 144, asparagine 265, asparagine 337, and asparagine 373 each carry an N-linked (GlcNAc...) asparagine glycan. Residues 210-369 (DNVNEIKHLD…SPKRELEINE (160 aa)) constitute a propeptide that is removed on maturation. Cystine bridges form between cysteine 395-cysteine 446 and cysteine 439-cysteine 478. Cysteine 398 is a catalytic residue. Threonine 416 carries the sulfothreonine modification. 2 residues coordinate chloride: phenylalanine 450 and tyrosine 452. N-linked (GlcNAc...) asparagine glycans are attached at residues asparagine 481, asparagine 490, and asparagine 507. Tyrosine 549 provides a ligand contact to chloride. Asparagine 615 carries an N-linked (GlcNAc...) asparagine glycan. Active-site residues include histidine 624 and asparagine 648. Asparagine 667 carries N-linked (GlcNAc...) asparagine glycosylation.

This sequence belongs to the peptidase C1 family. As to quaternary structure, monomer. Chloride serves as cofactor.

The protein localises to the vacuole lumen. It is found in the parasitophorous vacuole lumen. The catalysed reaction is Release of an N-terminal dipeptide, Xaa-Yaa-|-Zaa-, except when Xaa is Arg or Lys, or Yaa or Zaa is Pro.. Its function is as follows. Thiol protease that cleaves dipeptides from the N-terminus of protein substrates. Active against a broad range of dipeptide substrates composed of both polar and hydrophobic amino acids. Proline cannot occupy the P1 position and arginine or lysine cannot occupy the P2 position of the substrate. Involved in host hemoglobin degradation by generating dipeptides from hemoglobin-derived oligopeptides. The sequence is that of Dipeptidyl aminopeptidase 1 from Plasmodium falciparum (isolate 3D7).